The primary structure comprises 101 residues: uncharacterized protein (101 aa).

Residues 1-21 (MKLSTCCAALLLALASPAVLA) form the signal peptide. The segment covering 79–94 (RTTSGNVSAPAQSSQD) has biased composition (polar residues). The interval 79 to 101 (RTTSGNVSAPAQSSQDGAPAEPQ) is disordered.

This is an uncharacterized protein from Escherichia coli (strain K12).